A 349-amino-acid polypeptide reads, in one-letter code: MQQDGLSSVNQLGGLFVNGRPLPLDTRQQIVQLAIRGMRPCDISRSLKVSNGCVSKILGRYYRTGVLEPKGIGGSKPRLATPAVVARIAQLKDEYPALFAWEIQRQLCAEGLCTQDKAPSVSSINRVLRALQEDQRLHWTQLRSPAVLAPALPSPHSNCEAPRGPHPGTSHRNRTIFSPGQAEALEKEFQRGQYPDSVVRGKLAAATSLPEDTVRVWFSNRRAKWRRQEKLKWETQMPGASQDLMVPKDSPGIISAQQSPGSVPSAALPVLEQLNPSFCQLCWGAVPDRCSSDTTSQACLQPYWECHSLLPVASSSYMEFAWPCLTTHPVHHLIGGPGQAPSTYYLHWP.

The segment at residues 5 to 131 is a DNA-binding region (paired); it reads GLSSVNQLGG…SSINRVLRAL (127 aa). Residues 8 to 64 are PAI subdomain; the sequence is SVNQLGGLFVNGRPLPLDTRQQIVQLAIRGMRPCDISRSLKVSNGCVSKILGRYYRT. Residues 83–131 are RED subdomain; that stretch reads AVVARIAQLKDEYPALFAWEIQRQLCAEGLCTQDKAPSVSSINRVLRAL. The segment at residues 170 to 229 is a DNA-binding region (homeobox); it reads SHRNRTIFSPGQAEALEKEFQRGQYPDSVVRGKLAAATSLPEDTVRVWFSNRRAKWRRQE. Residues 278–349 are transcription repression; it reads FCQLCWGAVP…APSTYYLHWP (72 aa).

Belongs to the paired homeobox family. Specifically expressed in pancreatic islets.

The protein localises to the nucleus. Plays an important role in the differentiation and development of pancreatic islet beta cells. Transcriptional repressor that competes with PAX6 in binding to a common element in the glucagon, insulin and somatostatin promoters. This chain is Paired box protein Pax-4 (Pax4), found in Rattus norvegicus (Rat).